A 702-amino-acid polypeptide reads, in one-letter code: Amino-acid racemase (702 aa).

Residues 1–12 lie on the Cytoplasmic side of the membrane; that stretch reads MKHRANGIDLFR. The chain crosses the membrane as a helical span at residues 13-33; the sequence is IFAATMVVAIHTFPFQSIAPF. The Extracellular segment spans residues 34 to 39; that stretch reads LDEVIT. A helical transmembrane segment spans residues 40 to 60; it reads LTVFRVAVPFFFMITGYFLLG. The Cytoplasmic portion of the chain corresponds to 61–77; it reads RLSLNFSYNNNQRVKKY. The helical transmembrane segment at 78-98 threads the bilayer; it reads LYKIGMIYLYSILLYFPLSLL. Residues 99 to 120 are Extracellular-facing; sequence NGTISLKMNILLLLKVFIFDGT. A helical transmembrane segment spans residues 121–141; that stretch reads FYHLWYFPASIIGTILVTLLL. A topological domain (cytoplasmic) is located at residue arginine 142. A helical membrane pass occupies residues 143 to 163; it reads SIGFKLTVAFSTCLYLVGLGG. The Extracellular portion of the chain corresponds to 164-191; that stretch reads DSWYGITNQVPLLNKLYTFIFSWSDYTR. Residues 192-212 form a helical membrane-spanning segment; that stretch reads SGVFFTPVFLCLGIFAYRVSK. Residues 213-218 lie on the Cytoplasmic side of the membrane; it reads KLTASK. The chain crosses the membrane as a helical span at residues 219-239; it reads ILNLLFYVFIIGMTFESIFLH. At 240-248 the chain is on the extracellular side; the sequence is RFTNVKHDS. A helical transmembrane segment spans residues 249-269; the sequence is MYLLLPSCALILFLMLLNWQP. Over 270-276 the chain is Cytoplasmic; the sequence is KLKVKES. The helical transmembrane segment at 277–297 threads the bilayer; it reads ADLTLLVYILHPLVIVIVHSI. Over 298–307 the chain is Extracellular; it reads SKYIPILKNS. Residues 308–328 traverse the membrane as a helical segment; sequence LLNFLLVVVCSFILAQLLLNL. At 329–702 the chain is on the cytoplasmic side; sequence KRKLRVSKQK…LGSRLGTELN (374 aa). The interval 337-702 is racemase; the sequence is QKIPFERASK…LGSRLGTELN (366 aa). Catalysis depends on lysine 375, which acts as the Proton acceptor. Lysine 375 is subject to N6-(pyridoxal phosphate)lysine. Position 469 (arginine 469) interacts with substrate. The active-site Proton acceptor is tyrosine 601. Methionine 650 contributes to the substrate binding site.

It in the N-terminal section; belongs to the acyltransferase 3 family. The protein in the C-terminal section; belongs to the alanine racemase family. Pyridoxal 5'-phosphate is required as a cofactor.

Its subcellular location is the cell membrane. This is Amino-acid racemase (vanTE) from Enterococcus faecalis (Streptococcus faecalis).